A 173-amino-acid chain; its full sequence is Lactoylglutathione lyase (173 aa).

The VOC domain occupies valine 24–proline 170. Histidine 27 lines the Ni(2+) pocket. Arginine 31 contributes to the substrate binding site. Glutamate 93 lines the Ni(2+) pocket. Substrate contacts are provided by asparagine 97, arginine 116, and histidine 120. The Ni(2+) site is built by histidine 120 and glutamate 166. Glutamate 166 functions as the Proton donor/acceptor in the catalytic mechanism.

This sequence belongs to the glyoxalase I family. In terms of assembly, monomer. Ni(2+) is required as a cofactor. The cofactor is Zn(2+).

It carries out the reaction (R)-S-lactoylglutathione = methylglyoxal + glutathione. Its pathway is secondary metabolite metabolism; methylglyoxal degradation; (R)-lactate from methylglyoxal: step 1/2. In terms of biological role, catalyzes the conversion of hemimercaptal, formed from methylglyoxal and glutathione, to S-lactoylglutathione. The polypeptide is Lactoylglutathione lyase (gloA) (Pseudomonas putida (Arthrobacter siderocapsulatus)).